Reading from the N-terminus, the 320-residue chain is Cytochrome f (320 aa).

The first 35 residues, Met-1–Ala-35, serve as a signal peptide directing secretion. Heme is bound by residues Tyr-36, Cys-56, Cys-59, and His-60. Residues Val-286 to Lys-306 form a helical membrane-spanning segment.

Belongs to the cytochrome f family. The 4 large subunits of the cytochrome b6-f complex are cytochrome b6, subunit IV (17 kDa polypeptide, petD), cytochrome f and the Rieske protein, while the 4 small subunits are PetG, PetL, PetM and PetN. The complex functions as a dimer. Heme is required as a cofactor.

Its subcellular location is the plastid. The protein localises to the chloroplast thylakoid membrane. Component of the cytochrome b6-f complex, which mediates electron transfer between photosystem II (PSII) and photosystem I (PSI), cyclic electron flow around PSI, and state transitions. This chain is Cytochrome f, found in Solanum bulbocastanum (Wild potato).